The sequence spans 86 residues: Centromere protein W (86 aa).

It belongs to the CENP-W/WIP1 family. As to quaternary structure, heterodimer with CENPT; this dimer coassembles with CENPS-CENPX heterodimers at centromeres to form the tetrameric CENP-T-W-S-X complex, which is a subcomplex of the large constitutive centromere-associated network (CCAN, also known as the interphase centromere complex or ICEN). Interacts with NPM1.

The protein localises to the nucleus. It localises to the chromosome. Its subcellular location is the centromere. It is found in the kinetochore. The protein resides in the nucleus matrix. The protein localises to the nucleolus. Its function is as follows. Component of the CENPA-NAC (nucleosome-associated) complex, a complex that plays a central role in assembly of kinetochore proteins, mitotic progression and chromosome segregation. The CENPA-NAC complex recruits the CENPA-CAD (nucleosome distal) complex and may be involved in incorporation of newly synthesized CENPA into centromeres. Part of a nucleosome-associated complex that binds specifically to histone H3-containing nucleosomes at the centromere, as opposed to nucleosomes containing CENPA. Component of the heterotetrameric CENP-T-W-S-X complex that binds and supercoils DNA, and plays an important role in kinetochore assembly. CENPW has a fundamental role in kinetochore assembly and function. It is one of the inner kinetochore proteins, with most further proteins binding downstream. Required for normal chromosome organization and normal progress through mitosis. This is Centromere protein W (Cenpw) from Rattus norvegicus (Rat).